The primary structure comprises 1082 residues: Carbamoyl phosphate synthase large chain (1082 aa).

Positions 1-401 (MPKDKALKKV…ALLKAVRSLE (401 aa)) are carboxyphosphate synthetic domain. ATP is bound by residues Arg129, Arg169, Gly175, Gly176, Lys208, Val210, Glu215, Gly241, Ile242, His243, Gln284, and Glu298. The ATP-grasp 1 domain occupies 133–327 (KNMCLEIGEP…IAKVATKVAV (195 aa)). Gln284, Glu298, and Asn300 together coordinate Mg(2+). Gln284, Glu298, and Asn300 together coordinate Mn(2+). Residues 402–561 (TGVTGMNLPE…YSTYEDEDEA (160 aa)) form an oligomerization domain region. The carbamoyl phosphate synthetic domain stretch occupies residues 562–944 (EPQAVRKVVV…ALYKACLSAG (383 aa)). Residues 686-876 (DQLVAELGIP…MVNLATRICL (191 aa)) form the ATP-grasp 2 domain. Residues Arg722, Lys761, Leu763, Glu767, Gly792, Ile793, His794, Ser795, Gln835, and Glu847 each contribute to the ATP site. Gln835, Glu847, and Asn849 together coordinate Mg(2+). The Mn(2+) site is built by Gln835, Glu847, and Asn849. One can recognise an MGS-like domain in the interval 945-1082 (YTLPSSGKAV…PLIPLQEYVS (138 aa)). Residues 945–1082 (YTLPSSGKAV…PLIPLQEYVS (138 aa)) form an allosteric domain region.

The protein belongs to the CarB family. Composed of two chains; the small (or glutamine) chain promotes the hydrolysis of glutamine to ammonia, which is used by the large (or ammonia) chain to synthesize carbamoyl phosphate. Tetramer of heterodimers (alpha,beta)4. It depends on Mg(2+) as a cofactor. Mn(2+) is required as a cofactor.

The enzyme catalyses hydrogencarbonate + L-glutamine + 2 ATP + H2O = carbamoyl phosphate + L-glutamate + 2 ADP + phosphate + 2 H(+). It carries out the reaction hydrogencarbonate + NH4(+) + 2 ATP = carbamoyl phosphate + 2 ADP + phosphate + 2 H(+). Its pathway is amino-acid biosynthesis; L-arginine biosynthesis; carbamoyl phosphate from bicarbonate: step 1/1. The protein operates within pyrimidine metabolism; UMP biosynthesis via de novo pathway; (S)-dihydroorotate from bicarbonate: step 1/3. Its function is as follows. Large subunit of the glutamine-dependent carbamoyl phosphate synthetase (CPSase). CPSase catalyzes the formation of carbamoyl phosphate from the ammonia moiety of glutamine, carbonate, and phosphate donated by ATP, constituting the first step of 2 biosynthetic pathways, one leading to arginine and/or urea and the other to pyrimidine nucleotides. The large subunit (synthetase) binds the substrates ammonia (free or transferred from glutamine from the small subunit), hydrogencarbonate and ATP and carries out an ATP-coupled ligase reaction, activating hydrogencarbonate by forming carboxy phosphate which reacts with ammonia to form carbamoyl phosphate. The sequence is that of Carbamoyl phosphate synthase large chain from Desulforudis audaxviator (strain MP104C).